A 306-amino-acid polypeptide reads, in one-letter code: Isoaspartyl peptidase/L-asparaginase (306 aa).

T174 functions as the Nucleophile in the catalytic mechanism. Residues 202-205 and 224-227 contribute to the substrate site; these read RIGD and TGKG.

The protein belongs to the Ntn-hydrolase family. As to quaternary structure, heterotetramer of two alpha and two beta chains arranged as a dimer of alpha/beta heterodimers. Post-translationally, cleaved into an alpha and beta chain by autocatalysis; this activates the enzyme. The N-terminal residue of the beta subunit is responsible for the nucleophile hydrolase activity. In terms of tissue distribution, developing seeds.

The enzyme catalyses Cleavage of a beta-linked Asp residue from the N-terminus of a polypeptide.. Degrades proteins damaged by L-isoaspartyl residue formation (also known as beta-Asp residues). Also has L-asparaginase activity, which is used to liberate stored nitrogen during seed development. This is Isoaspartyl peptidase/L-asparaginase from Lupinus arboreus (Tree lupine).